A 152-amino-acid polypeptide reads, in one-letter code: UPF0266 membrane protein YobD (152 aa).

3 consecutive transmembrane segments (helical) span residues 6–26 (LVLI…QFIM), 45–65 (VDSV…VTSH), and 67–87 (AQMT…IFWI).

The protein belongs to the UPF0266 family.

It localises to the cell inner membrane. The chain is UPF0266 membrane protein YobD from Salmonella choleraesuis (strain SC-B67).